An 880-amino-acid polypeptide reads, in one-letter code: Alanine--tRNA ligase (880 aa).

Zn(2+) is bound by residues His-566, His-570, Cys-668, and His-672.

Belongs to the class-II aminoacyl-tRNA synthetase family. Zn(2+) serves as cofactor.

It is found in the cytoplasm. The catalysed reaction is tRNA(Ala) + L-alanine + ATP = L-alanyl-tRNA(Ala) + AMP + diphosphate. Catalyzes the attachment of alanine to tRNA(Ala) in a two-step reaction: alanine is first activated by ATP to form Ala-AMP and then transferred to the acceptor end of tRNA(Ala). Also edits incorrectly charged Ser-tRNA(Ala) and Gly-tRNA(Ala) via its editing domain. The chain is Alanine--tRNA ligase from Parafrankia sp. (strain EAN1pec).